The sequence spans 321 residues: Malate dehydrogenase (321 aa).

NAD(+) is bound by residues 10–15 (GAGQIG) and aspartate 34. 2 residues coordinate substrate: arginine 83 and arginine 89. Residues asparagine 96 and 119–121 (ITN) contribute to the NAD(+) site. Substrate-binding residues include asparagine 121 and arginine 152. The active-site Proton acceptor is histidine 176.

The protein belongs to the LDH/MDH superfamily. MDH type 3 family.

It carries out the reaction (S)-malate + NAD(+) = oxaloacetate + NADH + H(+). Catalyzes the reversible oxidation of malate to oxaloacetate. The polypeptide is Malate dehydrogenase (Methylocella silvestris (strain DSM 15510 / CIP 108128 / LMG 27833 / NCIMB 13906 / BL2)).